The sequence spans 380 residues: Phospho-N-acetylmuramoyl-pentapeptide-transferase (380 aa).

A run of 11 helical transmembrane segments spans residues 26–46 (IVAAGLTAMVLGLLLGPIFIE), 75–95 (MGGALILASVAIATLLFADLA), 98–118 (FVWAALLVTLGYGAIGFTDDW), 135–155 (LVLQVLVVVVVYYACLTDWRF), 161–181 (FPWVFVGSYVDLHVTLPFVPS), 183–203 (LFNPDLGFLYLPFMVFVVIAT), 222–242 (VVSAMTFLALSYVAGATIAGF), 259–279 (LGVFCSAIFGAGVAFLWYNTY), 283–303 (VFMGDVGSLALGGGLGMMAVL), 311–331 (AILHGVFLTETVSVILQVWSF), and 357–377 (KIIVRFWIISVMLALVALLSI).

This sequence belongs to the glycosyltransferase 4 family. MraY subfamily. It depends on Mg(2+) as a cofactor.

Its subcellular location is the cell inner membrane. It catalyses the reaction UDP-N-acetyl-alpha-D-muramoyl-L-alanyl-gamma-D-glutamyl-meso-2,6-diaminopimeloyl-D-alanyl-D-alanine + di-trans,octa-cis-undecaprenyl phosphate = di-trans,octa-cis-undecaprenyl diphospho-N-acetyl-alpha-D-muramoyl-L-alanyl-D-glutamyl-meso-2,6-diaminopimeloyl-D-alanyl-D-alanine + UMP. The protein operates within cell wall biogenesis; peptidoglycan biosynthesis. Functionally, catalyzes the initial step of the lipid cycle reactions in the biosynthesis of the cell wall peptidoglycan: transfers peptidoglycan precursor phospho-MurNAc-pentapeptide from UDP-MurNAc-pentapeptide onto the lipid carrier undecaprenyl phosphate, yielding undecaprenyl-pyrophosphoryl-MurNAc-pentapeptide, known as lipid I. The polypeptide is Phospho-N-acetylmuramoyl-pentapeptide-transferase (Anaeromyxobacter dehalogenans (strain 2CP-1 / ATCC BAA-258)).